A 137-amino-acid polypeptide reads, in one-letter code: Early nodulin-55-1 (137 aa).

Positions 1–67 (KYDERTESVH…GLKLMVVVMS (67 aa)) constitute a Phytocyanin domain. Asn13, Asn51, and Asn68 each carry an N-linked (GlcNAc...) asparagine glycan. A disulfide bridge links Cys20 with Cys55. A disordered region spans residues 70–115 (TKKKLIHSPSPSSPSPSPSPSPSPSPSPSPSLSSPSPSPLPNNQGV). Positions 80-98 (PSSPSPSPSPSPSPSPSPS) are enriched in pro residues.

It belongs to the early nodulin-like (ENODL) family.

Its subcellular location is the symbiosome. The protein resides in the peribacteroid membrane. Its function is as follows. May act as a carbohydrate transporter. The protein is Early nodulin-55-1 of Glycine max (Soybean).